A 505-amino-acid chain; its full sequence is Histidine ammonia-lyase (505 aa).

Residues 141 to 143 constitute a cross-link (5-imidazolinone (Ala-Gly)); sequence ASG. Ser142 is subject to 2,3-didehydroalanine (Ser).

Belongs to the PAL/histidase family. Contains an active site 4-methylidene-imidazol-5-one (MIO), which is formed autocatalytically by cyclization and dehydration of residues Ala-Ser-Gly.

The protein localises to the cytoplasm. The catalysed reaction is L-histidine = trans-urocanate + NH4(+). It participates in amino-acid degradation; L-histidine degradation into L-glutamate; N-formimidoyl-L-glutamate from L-histidine: step 1/3. The polypeptide is Histidine ammonia-lyase (Bacillus mycoides (strain KBAB4) (Bacillus weihenstephanensis)).